We begin with the raw amino-acid sequence, 416 residues long: Putative competence-damage inducible protein (416 aa).

It belongs to the CinA family.

This is Putative competence-damage inducible protein from Bacillus pumilus (strain SAFR-032).